A 1297-amino-acid polypeptide reads, in one-letter code: Phosphoribosylformylglycinamidine synthase (1297 aa).

Residues 307-318 and Ala678 contribute to the ATP site; that span reads GASTGSGGEIRD. Positions 718, 722, and 886 each coordinate Mg(2+). The 254-residue stretch at 1044-1297 folds into the Glutamine amidotransferase type-1 domain; that stretch reads MAILREQGVN…MFQNARKNLG (254 aa). The active-site Nucleophile is the Cys1137. Residues His1262 and Glu1264 contribute to the active site.

In the N-terminal section; belongs to the FGAMS family. Monomer.

It is found in the cytoplasm. The enzyme catalyses N(2)-formyl-N(1)-(5-phospho-beta-D-ribosyl)glycinamide + L-glutamine + ATP + H2O = 2-formamido-N(1)-(5-O-phospho-beta-D-ribosyl)acetamidine + L-glutamate + ADP + phosphate + H(+). It functions in the pathway purine metabolism; IMP biosynthesis via de novo pathway; 5-amino-1-(5-phospho-D-ribosyl)imidazole from N(2)-formyl-N(1)-(5-phospho-D-ribosyl)glycinamide: step 1/2. In terms of biological role, phosphoribosylformylglycinamidine synthase involved in the purines biosynthetic pathway. Catalyzes the ATP-dependent conversion of formylglycinamide ribonucleotide (FGAR) and glutamine to yield formylglycinamidine ribonucleotide (FGAM) and glutamate. The protein is Phosphoribosylformylglycinamidine synthase of Vibrio vulnificus (strain CMCP6).